The following is a 562-amino-acid chain: Protein FAM83D-B (562 aa).

Positions 424-472 (ITTQTTETSQCTTQTPAPTSSVARLSNSSNSSSSSFSSASTTSTGSNCS) are disordered. Residues 425–472 (TTQTTETSQCTTQTPAPTSSVARLSNSSNSSSSSFSSASTTSTGSNCS) show a composition bias toward low complexity.

The protein belongs to the FAM83 family.

It localises to the cytoplasm. It is found in the cytoskeleton. The protein resides in the spindle. Its subcellular location is the spindle pole. In terms of biological role, may regulate cell proliferation, growth, migration and epithelial to mesenchymal transition. May also be important for proper chromosome congression and alignment during mitosis. This Xenopus laevis (African clawed frog) protein is Protein FAM83D-B.